The following is a 420-amino-acid chain: UDP-N-acetyl-D-mannosamine dehydrogenase (420 aa).

NAD(+) is bound by residues Tyr13, Ile14, Asp33, Thr85, and Thr126. Residues Arg160, Val161, Lys212, Asn216, Arg219, His250, Arg252, and Gly263 each coordinate UDP-N-acetyl-alpha-D-mannosaminouronate. Lys212 serves as the catalytic Proton donor/acceptor. Cys266 serves as the catalytic Nucleophile. Residues Phe330 and Lys331 each coordinate UDP-N-acetyl-alpha-D-mannosaminouronate. Arg338 lines the NAD(+) pocket. UDP-N-acetyl-alpha-D-mannosaminouronate is bound at residue Lys416.

Belongs to the UDP-glucose/GDP-mannose dehydrogenase family. WecC subfamily. As to quaternary structure, homodimer.

It carries out the reaction UDP-N-acetyl-alpha-D-mannosamine + 2 NAD(+) + H2O = UDP-N-acetyl-alpha-D-mannosaminouronate + 2 NADH + 3 H(+). Its pathway is bacterial outer membrane biogenesis; enterobacterial common antigen biosynthesis. Its function is as follows. Catalyzes the four-electron oxidation of UDP-N-acetyl-D-mannosamine (UDP-ManNAc), reducing NAD(+) and releasing UDP-N-acetylmannosaminuronic acid (UDP-ManNAcA). The chain is UDP-N-acetyl-D-mannosamine dehydrogenase from Yersinia pestis.